The sequence spans 1413 residues: DNA-directed RNA polymerase subunit beta' (1413 aa).

Zn(2+) contacts are provided by cysteine 70, cysteine 72, cysteine 85, and cysteine 88. The Mg(2+) site is built by aspartate 460, aspartate 462, and aspartate 464. Zn(2+)-binding residues include cysteine 819, cysteine 893, cysteine 900, and cysteine 903. The tract at residues 1393-1413 (EAFEFGTPETPAAEQTPHTNE) is disordered.

The protein belongs to the RNA polymerase beta' chain family. In terms of assembly, the RNAP catalytic core consists of 2 alpha, 1 beta, 1 beta' and 1 omega subunit. When a sigma factor is associated with the core the holoenzyme is formed, which can initiate transcription. The cofactor is Mg(2+). Zn(2+) serves as cofactor.

The enzyme catalyses RNA(n) + a ribonucleoside 5'-triphosphate = RNA(n+1) + diphosphate. Its function is as follows. DNA-dependent RNA polymerase catalyzes the transcription of DNA into RNA using the four ribonucleoside triphosphates as substrates. In Paraburkholderia phymatum (strain DSM 17167 / CIP 108236 / LMG 21445 / STM815) (Burkholderia phymatum), this protein is DNA-directed RNA polymerase subunit beta'.